A 495-amino-acid chain; its full sequence is Glycerol kinase (495 aa).

Thr11 provides a ligand contact to ADP. ATP-binding residues include Thr11, Thr12, and Ser13. Thr11 contacts sn-glycerol 3-phosphate. ADP is bound at residue Arg15. Sn-glycerol 3-phosphate is bound by residues Arg81, Glu82, Tyr133, and Asp242. Glycerol-binding residues include Arg81, Glu82, Tyr133, Asp242, and Gln243. 2 residues coordinate ADP: Thr264 and Gly307. ATP-binding residues include Thr264, Gly307, Gln311, and Gly410. Gly410 is an ADP binding site.

This sequence belongs to the FGGY kinase family.

It catalyses the reaction glycerol + ATP = sn-glycerol 3-phosphate + ADP + H(+). It participates in polyol metabolism; glycerol degradation via glycerol kinase pathway; sn-glycerol 3-phosphate from glycerol: step 1/1. Its activity is regulated as follows. Inhibited by fructose 1,6-bisphosphate (FBP). Its function is as follows. Key enzyme in the regulation of glycerol uptake and metabolism. Catalyzes the phosphorylation of glycerol to yield sn-glycerol 3-phosphate. This is Glycerol kinase from Roseobacter denitrificans (strain ATCC 33942 / OCh 114) (Erythrobacter sp. (strain OCh 114)).